A 206-amino-acid polypeptide reads, in one-letter code: Small ribosomal subunit protein uS2 (206 aa).

The protein belongs to the universal ribosomal protein uS2 family.

This chain is Small ribosomal subunit protein uS2, found in Pyrobaculum neutrophilum (strain DSM 2338 / JCM 9278 / NBRC 100436 / V24Sta) (Thermoproteus neutrophilus).